Here is a 303-residue protein sequence, read N- to C-terminus: tRNA pseudouridine synthase B (303 aa).

The active-site Nucleophile is the Asp-38.

Belongs to the pseudouridine synthase TruB family. Type 1 subfamily.

The catalysed reaction is uridine(55) in tRNA = pseudouridine(55) in tRNA. In terms of biological role, responsible for synthesis of pseudouridine from uracil-55 in the psi GC loop of transfer RNAs. The chain is tRNA pseudouridine synthase B from Oceanobacillus iheyensis (strain DSM 14371 / CIP 107618 / JCM 11309 / KCTC 3954 / HTE831).